The sequence spans 257 residues: Ribonuclease PH (257 aa).

Phosphate-binding positions include R86 and 124–126 (GTR).

The protein belongs to the RNase PH family. Homohexameric ring arranged as a trimer of dimers.

It carries out the reaction tRNA(n+1) + phosphate = tRNA(n) + a ribonucleoside 5'-diphosphate. Its function is as follows. Phosphorolytic 3'-5' exoribonuclease that plays an important role in tRNA 3'-end maturation. Removes nucleotide residues following the 3'-CCA terminus of tRNAs; can also add nucleotides to the ends of RNA molecules by using nucleoside diphosphates as substrates, but this may not be physiologically important. Probably plays a role in initiation of 16S rRNA degradation (leading to ribosome degradation) during starvation. The polypeptide is Ribonuclease PH (Halalkalibacterium halodurans (strain ATCC BAA-125 / DSM 18197 / FERM 7344 / JCM 9153 / C-125) (Bacillus halodurans)).